Here is a 199-residue protein sequence, read N- to C-terminus: Nuclear protein UL4 (199 aa).

The protein belongs to the alphaherpesvirinae HHV-1 UL4 family.

Its subcellular location is the host nucleus. This Homo sapiens (Human) protein is Nuclear protein UL4.